The chain runs to 120 residues: Ribonuclease P protein component (120 aa).

The protein belongs to the RnpA family. As to quaternary structure, consists of a catalytic RNA component (M1 or rnpB) and a protein subunit.

The catalysed reaction is Endonucleolytic cleavage of RNA, removing 5'-extranucleotides from tRNA precursor.. In terms of biological role, RNaseP catalyzes the removal of the 5'-leader sequence from pre-tRNA to produce the mature 5'-terminus. It can also cleave other RNA substrates such as 4.5S RNA. The protein component plays an auxiliary but essential role in vivo by binding to the 5'-leader sequence and broadening the substrate specificity of the ribozyme. This Chlamydia trachomatis serovar L2 (strain ATCC VR-902B / DSM 19102 / 434/Bu) protein is Ribonuclease P protein component.